Consider the following 134-residue polypeptide: uncharacterized protein (134 aa).

The first 16 residues, 1–16, serve as a signal peptide directing secretion; it reads MAKAVALLLAAIAASA.

This is an uncharacterized protein from Oryza sativa subsp. indica (Rice).